A 124-amino-acid chain; its full sequence is Small ribosomal subunit protein uS12 (124 aa).

A 3-methylthioaspartic acid modification is found at D89.

Belongs to the universal ribosomal protein uS12 family. As to quaternary structure, part of the 30S ribosomal subunit. Contacts proteins S8 and S17. May interact with IF1 in the 30S initiation complex.

With S4 and S5 plays an important role in translational accuracy. Functionally, interacts with and stabilizes bases of the 16S rRNA that are involved in tRNA selection in the A site and with the mRNA backbone. Located at the interface of the 30S and 50S subunits, it traverses the body of the 30S subunit contacting proteins on the other side and probably holding the rRNA structure together. The combined cluster of proteins S8, S12 and S17 appears to hold together the shoulder and platform of the 30S subunit. The chain is Small ribosomal subunit protein uS12 from Proteus mirabilis (strain HI4320).